Here is a 220-residue protein sequence, read N- to C-terminus: Nucleolar protein 3 (220 aa).

Residue glycine 2 is the site of N-myristoyl glycine attachment. One can recognise a CARD domain in the interval 4–95 (VQERPSETID…MPDPAWDWQH (92 aa)). Residues 20 to 70 (VETLQADSGLLLDALVARGVLTGPEYEALDALPDAERRVRRLLLLVQSKGE) form an essential for interaction with BAX region. The disordered stretch occupies residues 111–220 (GHWTPEAPSS…FQEEDESEDS (110 aa)). Threonine 149 is subject to Phosphothreonine; by CK2. Positions 152-220 (EPELEAEATE…FQEEDESEDS (69 aa)) are enriched in acidic residues.

In terms of assembly, oligomerizes (via CARD doamin). Interacts (via CARD domain) with CASP2; inhibits CASP2 activity in a phosphorylation-dependent manner. Interacts with CASP8; decreases CASP8 activity in a mitochondria localization- and phosphorylation-dependent manner and this interaction is dissociated by calcium. Interacts with TFPT; translocates NOL3 into the nucleus and negatively regulated TFPT-induced cell death. Interacts directly (via CARD domain) with FAS and FADD (via DED domain); inhibits death-inducing signaling complex (DISC) assembly by inhibiting the increase in FAS-FADD binding induced by FAS activation. Interacts (via CARD domain) with BAX (via a C-terminal 33 residues); inhibits BAX activation and translocation and consequently cytochrome c release from mitochondria. Interacts with PPM1G; may dephosphorylate NOL3. Interacts (via CARD domain) with BBC3 (via BH3 domain); preventing the association of BBC3 with BCL2 and resulting in activation of CASP8. Interacts (via CARD domain) with BAD(via BH3 domain); preventing the association of BAD with BCL2. Interacts directly (via CARD domain) with TNFRSF1A; inhibits TNF-signaling pathway. Post-translationally, phosphorylation at Thr-149 is required for its antiapoptotic effect by blocking death-inducing signaling complex death-inducing signaling complex (DISC) activity through the control of interaction with CASP8. Phosphorylation at Thr-149 results in translocation to mitochondria and this translocation enables the binding to CASP8. Dephosphorylated at Thr-149 by calcineurin; doesn't inhibit the association between FADD and CASP8 and the consequent apoptosis. In terms of processing, polyubiquitinated by MDM2; promoting proteasomal-dependent degradation in response to apoptotic stimuli.

The protein resides in the cytoplasm. It localises to the mitochondrion. Its subcellular location is the sarcoplasmic reticulum. It is found in the membrane. Apoptosis repressor that blocks multiple modes of cell death. Inhibits extrinsic apoptotic pathways through two different ways. Firstly by interacting with FAS and FADD upon FAS activation blocking death-inducing signaling complex (DISC) assembly. Secondly by interacting with CASP8 in a mitochondria localization- and phosphorylation-dependent manner, limiting the amount of soluble CASP8 available for DISC-mediated activation. Inhibits intrinsic apoptotic pathway in response to a wide range of stresses, through its interaction with BAX resulting in BAX inactivation, preventing mitochondrial dysfunction and release of pro-apoptotic factors. Inhibits calcium-mediated cell death by functioning as a cytosolic calcium buffer, dissociating its interaction with CASP8 and maintaining calcium homeostasis. Negatively regulates oxidative stress-induced apoptosis by phosphorylation-dependent suppression of the mitochondria-mediated intrinsic pathway, by blocking CASP2 activation and BAX translocation. Negatively regulates hypoxia-induced apoptosis in part by inhibiting the release of cytochrome c from mitochondria in a caspase-independent manner. Also inhibits TNF-induced necrosis by preventing TNF-signaling pathway through TNFRSF1A interaction abrogating the recruitment of RIPK1 to complex I. Finally through its role as apoptosis repressor, promotes vascular remodeling through inhibition of apoptosis and stimulation of proliferation, in response to hypoxia. Inhibits too myoblast differentiation through caspase inhibition. This chain is Nucleolar protein 3 (Nol3), found in Mus musculus (Mouse).